The following is a 591-amino-acid chain: MSGACREVVTLQLGHYSNFIGTHWWNLQDAGLVYDADVPAGELQSDVLFREGLTLAGHVTYTPRLIAIDLKGSLQTLRKEGSLYDTENENSAFTWDGQIMTHQESPPSKNSFLQELDNLDTGGVLAESDFNHLTSSVDNCSVPGASVAVETINSSLERIQKSYRLEGSVRVWSDFLRLHLHPRTISVINQYNHDGESERLEVFGQGEALLQGQVLEDLEDRLHFFIEECDYLQGFQVLCDLTDGFSGLGSKVTEYLQDSYGGRGILTWGVAPVNHPDTSSMKDLYHMMNCALGTLQMANHSSLFCPLTLRGGLCRRPPPPTAFPLLNCDPLLWYHSSSVLALALDALTVSYRMRHCSATMWQLSDALTTSGRKVVSAYGSVPFPMMLGGCLPDALDAFSNAVPWRSLSACPEISDRRFCFSQSVTLKGVDEQSLVSRLLPGMEAPSPLHYERSGEDVLSAYVRSHYPSSPLAVQLVSSGSKVTPPFPQIFSPSLSAQGFLQSHSTPASPSCPPVSCLPVLTSLQSSPAVGLQLSELQRACASLDLRRVAPSFLTHGPEHAEISEYLEQLRNLAHCYRQSHSRSSSEEDDDD.

Belongs to the misato family.

It localises to the mitochondrion outer membrane. It is found in the cytoplasm. In terms of biological role, involved in the regulation of mitochondrial distribution and morphology. Required for mitochondrial fusion and mitochondrial network formation. The sequence is that of Protein misato homolog 1 (msto1) from Danio rerio (Zebrafish).